We begin with the raw amino-acid sequence, 383 residues long: Protein FAM217B (383 aa).

6 disordered regions span residues 1-70, 89-115, 200-222, 232-251, 284-325, and 338-383; these read MNAG…CQGA, ADED…PPDL, KAKG…KSPG, SKPL…RKKA, QTLE…HIRV, and SCKA…YKLK. A compositionally biased stretch (polar residues) spans 8–43; it reads NKVQHSKNSSGKRQSKSQVPHASSQPRSSLTAVTQP. A compositionally biased stretch (basic and acidic residues) spans 44–56; the sequence is TEEKLKESISPEA. Residues 374–383 show a composition bias toward polar residues; it reads GVKQNTYKLK.

Belongs to the FAM217 family.

The polypeptide is Protein FAM217B (FAM217B) (Homo sapiens (Human)).